The sequence spans 61 residues: Large ribosomal subunit protein bL32 (61 aa).

The span at 1-18 (MAIVPKRKTSKQRKRKRQ) shows a compositional bias: basic residues. The segment at 1-20 (MAIVPKRKTSKQRKRKRQTH) is disordered.

The protein belongs to the bacterial ribosomal protein bL32 family.

This is Large ribosomal subunit protein bL32 (rpmF) from Mycoplasmopsis pulmonis (strain UAB CTIP) (Mycoplasma pulmonis).